The following is a 390-amino-acid chain: 5-hydroxytryptamine receptor 1B (390 aa).

Topologically, residues 1–46 (MEEPGAQCAPPPPAGSETWVPQANLSSAPSQNCSAKDYIYQDSISL) are extracellular. N-linked (GlcNAc...) asparagine glycosylation is found at N24 and N32. The chain crosses the membrane as a helical span at residues 47-72 (PWKVLLVMLLALITLATTLSNAFVIA). At 73-86 (TVYRTRKLHTPANY) the chain is on the cytoplasmic side. The helical transmembrane segment at 87-111 (LIASLAVTDLLVSILVMPISTMYTV) threads the bilayer. Topologically, residues 112–119 (TGRWTLGQ) are extracellular. A helical transmembrane segment spans residues 120–145 (VVCDFWLSSDITCCTASILHLCVIAL). A disulfide bond links C122 and C199. Residues D129 and T134 each coordinate ergotamine. The DRY motif; important for ligand-induced conformation changes and signaling motif lies at 146-148 (DRY). Over 146 to 165 (DRYWAITDAVEYSAKRTPKR) the chain is Cytoplasmic. Residues 166–184 (AAVMIALVWVFSISISLPP) traverse the membrane as a helical segment. The Extracellular segment spans residues 185-205 (FFWRQAKAEEEVSECVVNTDH). An ergotamine-binding site is contributed by V201. A helical membrane pass occupies residues 206–229 (ILYTVYSTVGAFYFPTLLLIALYG). The Cytoplasmic segment spans residues 230 to 315 (RIYVEARSRI…AARERKATKT (86 aa)). Residues 259–272 (DSPGSTSSVTSINS) show a composition bias toward polar residues. The tract at residues 259–281 (DSPGSTSSVTSINSRVPDVPSES) is disordered. The chain crosses the membrane as a helical span at residues 316-337 (LGIILGAFIVCWLPFFIISLVM). Topologically, residues 338–347 (PICKDACWFH) are extracellular. A helical transmembrane segment spans residues 348-370 (LAIFDFFTWLGYLNSLINPIIYT). Residues 365–369 (NPIIY) carry the NPxxY motif; important for ligand-induced conformation changes and signaling motif. At 371-390 (MSNEDFKQAFHKLIRFKCTS) the chain is on the cytoplasmic side. C388 carries S-palmitoyl cysteine lipidation.

This sequence belongs to the G-protein coupled receptor 1 family. Homodimer. Heterodimer with HTR1D. Phosphorylated. Desensitization of the receptor may be mediated by its phosphorylation. Post-translationally, palmitoylated. Detected in cerebral artery smooth muscle cells (at protein level). Detected in brain cortex, striatum, amygdala, medulla, hippocampus, caudate nucleus and putamen.

The protein resides in the cell membrane. Functionally, G-protein coupled receptor for 5-hydroxytryptamine (serotonin). Also functions as a receptor for ergot alkaloid derivatives, various anxiolytic and antidepressant drugs and other psychoactive substances, such as lysergic acid diethylamide (LSD). Ligand binding causes a conformation change that triggers signaling via guanine nucleotide-binding proteins (G proteins) and modulates the activity of downstream effectors, such as adenylate cyclase. HTR1B is coupled to G(i)/G(o) G alpha proteins and mediates inhibitory neurotransmission by inhibiting adenylate cyclase activity. Arrestin family members inhibit signaling via G proteins and mediate activation of alternative signaling pathways. Regulates the release of 5-hydroxytryptamine, dopamine and acetylcholine in the brain, and thereby affects neural activity, nociceptive processing, pain perception, mood and behavior. Besides, plays a role in vasoconstriction of cerebral arteries. This Homo sapiens (Human) protein is 5-hydroxytryptamine receptor 1B.